Consider the following 363-residue polypeptide: 24-methylenesterol C-methyltransferase 2 (363 aa).

A helical transmembrane segment spans residues 6–26 (MAWTAAGVGMALVYWFVWVMG).

It belongs to the class I-like SAM-binding methyltransferase superfamily. Erg6/SMT family.

The protein localises to the membrane. The catalysed reaction is 24-methylidenelophenol + S-adenosyl-L-methionine = (Z)-24-ethylidenelophenol + S-adenosyl-L-homocysteine + H(+). It participates in steroid biosynthesis; sterol biosynthesis. Its function is as follows. Catalyzes the methyl transfer from S-adenosyl-methionine to the methylene group of 24-methylene lophenol to form 24-ethylidene lophenol. In Oryza sativa subsp. japonica (Rice), this protein is 24-methylenesterol C-methyltransferase 2 (Smt2-1).